Reading from the N-terminus, the 242-residue chain is Uridylate kinase (242 aa).

An ATP-binding site is contributed by K15–G18. UMP is bound at residue G57. G58 and R62 together coordinate ATP. Residues D78 and T139 to T146 each bind UMP. The ATP site is built by T166, Y172, and D175.

It belongs to the UMP kinase family. In terms of assembly, homohexamer.

It localises to the cytoplasm. The enzyme catalyses UMP + ATP = UDP + ADP. It functions in the pathway pyrimidine metabolism; CTP biosynthesis via de novo pathway; UDP from UMP (UMPK route): step 1/1. With respect to regulation, inhibited by UTP. Catalyzes the reversible phosphorylation of UMP to UDP. This is Uridylate kinase from Acinetobacter baumannii (strain ATCC 17978 / DSM 105126 / CIP 53.77 / LMG 1025 / NCDC KC755 / 5377).